Here is a 352-residue protein sequence, read N- to C-terminus: Histidine biosynthesis bifunctional protein HisB (352 aa).

The segment at 1 to 164 (MSQKILFIDR…EIENEILSSF (164 aa)) is histidinol-phosphatase. The active-site Nucleophile is the D9. Residues D9 and D11 each contribute to the Mg(2+) site. D11 serves as the catalytic Proton donor. C93, H95, C101, and C103 together coordinate Zn(2+). D130 is a binding site for Mg(2+). Residues 165–352 (RSASYQRTTK…ENLASSKGVI (188 aa)) form an imidazoleglycerol-phosphate dehydratase region.

The protein in the N-terminal section; belongs to the histidinol-phosphatase family. This sequence in the C-terminal section; belongs to the imidazoleglycerol-phosphate dehydratase family. Requires Mg(2+) as cofactor. Zn(2+) serves as cofactor.

The protein localises to the cytoplasm. The enzyme catalyses D-erythro-1-(imidazol-4-yl)glycerol 3-phosphate = 3-(imidazol-4-yl)-2-oxopropyl phosphate + H2O. The catalysed reaction is L-histidinol phosphate + H2O = L-histidinol + phosphate. It functions in the pathway amino-acid biosynthesis; L-histidine biosynthesis; L-histidine from 5-phospho-alpha-D-ribose 1-diphosphate: step 6/9. It participates in amino-acid biosynthesis; L-histidine biosynthesis; L-histidine from 5-phospho-alpha-D-ribose 1-diphosphate: step 8/9. This Campylobacter jejuni subsp. jejuni serotype O:23/36 (strain 81-176) protein is Histidine biosynthesis bifunctional protein HisB.